The chain runs to 476 residues: MAVPFVEDWDLVQTLGEGAYGEVQLAVNRITEEAVAVKIVDMKRAIDCPENIKKEICINKMLSHENVVKFYGHRREGHIQYLFLEYCSGGELFDRIEPDIGMPEQDAQRFFHQLMAGVVYLHGIGITHRDIKPENLLLDERDNLKISDFGLATVFRHNNRERLLNKMCGTLPYVAPELLKRKEFHAEPVDVWSCGIVLTAMLAGELPWDQPSDSCQEYSDWKEKKTYLNPWKKIDSAPLALLHKILVETPSARITIPDIKKDRWYNKPLNRGAKRPRATSGGMSESSSGFSKHIHSNLDFSPVNNGSSEETVKFSSSQPEPRTGLSLWDTGPSNVDKLVQGISFSQPTCPEHMLVNSQLLGTPGSSQNPWQRLVKRMTRFFTKLDADKSYQCLKETFEKLGYQWKKSCMNQVTVSTTDRRNNKLIFKINLVEMDEKILVDFRLSKGDGLEFKRHFLKIKGKLSDVVSSQKVWFPVT.

The tract at residues 1–265 (MAVPFVEDWD…IPDIKKDRWY (265 aa)) is interaction with CLSPN. The 257-residue stretch at 9–265 (WDLVQTLGEG…IPDIKKDRWY (257 aa)) folds into the Protein kinase domain. Residues 15–23 (LGEGAYGEV) and lysine 38 each bind ATP. The active-site Proton acceptor is the aspartate 130. Lysine 132 is covalently cross-linked (Glycyl lysine isopeptide (Lys-Gly) (interchain with G-Cter in ubiquitin)). A disordered region spans residues 267 to 331 (KPLNRGAKRP…RTGLSLWDTG (65 aa)). At serine 280 the chain carries Phosphoserine; by PKB/AKT1. The segment covering 280 to 291 (SGGMSESSSGFS) has biased composition (low complexity). Phosphoserine is present on residues serine 286, serine 296, and serine 301. Positions 298 to 320 (LDFSPVNNGSSEETVKFSSSQPE) are enriched in polar residues. Serine 317 carries the phosphoserine; by ATM and ATR modification. Position 345 is a phosphoserine; by ATR (serine 345). The segment at 391–476 (QCLKETFEKL…SSQKVWFPVT (86 aa)) is autoinhibitory region. Residue lysine 436 forms a Glycyl lysine isopeptide (Lys-Gly) (interchain with G-Cter in ubiquitin) linkage. 3 positions are modified to phosphoserine: serine 463, serine 467, and serine 468.

Belongs to the protein kinase superfamily. CAMK Ser/Thr protein kinase family. NIM1 subfamily. As to quaternary structure, interacts (phosphorylated by ATR) with RAD51. Interacts with and phosphorylates CLSPN, an adapter protein that regulates the ATR-dependent phosphorylation of CHEK1. Interacts with BRCA1. Interacts with and phosphorylates CDC25A, CDC25B and CDC25C. Interacts with FBXO6, which regulates CHEK1. Interacts with PPM1D, which regulates CHEK1 through dephosphorylation. Interacts with TIMELESS; DNA damage-dependent. Interacts with FEM1B; activates CHEK1 in response to stress. Interacts with TLK1. Interacts with XPO1 and YWHAZ. Interacts with CDK5RAP3; antagonizes CHEK1. Phosphorylated by ATR in a RAD17-dependent manner in response to ultraviolet irradiation and inhibition of DNA replication. Phosphorylated by ATM in response to ionizing irradiation. ATM and ATR can both phosphorylate Ser-317 and Ser-345 and this results in enhanced kinase activity. Phosphorylation at Ser-345 induces a change in the conformation of the protein, activates the kinase activity and is a prerequisite for interaction with FBXO6 and subsequent ubiquitination at Lys-436. Phosphorylation at Ser-345 also increases binding to 14-3-3 proteins and promotes nuclear retention. Conversely, dephosphorylation at Ser-345 by PPM1D may contribute to exit from checkpoint mediated cell cycle arrest. Phosphorylation at Ser-280 by AKT1/PKB, may promote mono and/or diubiquitination. Also phosphorylated at undefined residues during mitotic arrest, resulting in decreased activity. Post-translationally, ubiquitinated. Mono or diubiquitination promotes nuclear exclusion. The activated form (phosphorylated on Ser-345) is polyubiquitinated at Lys-436 by some SCF-type E3 ubiquitin ligase complex containing FBXO6 promoting its degradation. Ubiquitination and degradation are required to terminate the checkpoint and ensure that activated CHEK1 does not accumulate as cells progress through S phase, when replication forks encounter transient impediments during normal DNA replication. 'Lys-63'-mediated ubiquitination by TRAF4 at Lys-132 activates cell cycle arrest and activation of DNA repair. In terms of processing, proteolytically cleaved at the C-terminus by SPRTN during normal DNA replication, thereby promoting CHEK1 removal from chromatin and activating the protein kinase activity. In terms of tissue distribution, found in all adult tissues tested. Elevated expression in testis, lung and spleen. 15.5 day old embryos show ubiquitous expression with strong expression in brain, liver, kidney, pancreas, intestine, thymus and lung.

The protein resides in the nucleus. It localises to the chromosome. Its subcellular location is the cytoplasm. It is found in the cytoskeleton. The protein localises to the microtubule organizing center. The protein resides in the centrosome. The catalysed reaction is L-seryl-[protein] + ATP = O-phospho-L-seryl-[protein] + ADP + H(+). It catalyses the reaction L-threonyl-[protein] + ATP = O-phospho-L-threonyl-[protein] + ADP + H(+). Activated through phosphorylation predominantly by ATR but also by ATM in response to DNA damage or inhibition of DNA replication. Activation is modulated by several mediators including CLSPN, BRCA1 and FEM1B. Proteolytic cleavage at the C-terminus by SPRTN during normal DNA replication activates the protein kinase activity. Functionally, serine/threonine-protein kinase which is required for checkpoint-mediated cell cycle arrest and activation of DNA repair in response to the presence of DNA damage or unreplicated DNA. May also negatively regulate cell cycle progression during unperturbed cell cycles. This regulation is achieved by a number of mechanisms that together help to preserve the integrity of the genome. Recognizes the substrate consensus sequence [R-X-X-S/T]. Binds to and phosphorylates CDC25A, CDC25B and CDC25C. Phosphorylation of CDC25A at 'Ser-178' and 'Thr-507' and phosphorylation of CDC25C at 'Ser-216' creates binding sites for 14-3-3 proteins which inhibit CDC25A and CDC25C. Phosphorylation of CDC25A at 'Ser-76', 'Ser-124', 'Ser-178', 'Ser-279' and 'Ser-293' promotes proteolysis of CDC25A. Phosphorylation of CDC25A at 'Ser-76' primes the protein for subsequent phosphorylation at 'Ser-79', 'Ser-82' and 'Ser-88' by NEK11, which is required for polyubiquitination and degradation of CDCD25A. Inhibition of CDC25 leads to increased inhibitory tyrosine phosphorylation of CDK-cyclin complexes and blocks cell cycle progression. Also phosphorylates NEK6. Binds to and phosphorylates RAD51 at 'Thr-309', which promotes the release of RAD51 from BRCA2 and enhances the association of RAD51 with chromatin, thereby promoting DNA repair by homologous recombination. Phosphorylates multiple sites within the C-terminus of TP53, which promotes activation of TP53 by acetylation and promotes cell cycle arrest and suppression of cellular proliferation. Also promotes repair of DNA cross-links through phosphorylation of FANCE. Binds to and phosphorylates TLK1 at 'Ser-743', which prevents the TLK1-dependent phosphorylation of the chromatin assembly factor ASF1A. This may enhance chromatin assembly both in the presence or absence of DNA damage. May also play a role in replication fork maintenance through regulation of PCNA. May regulate the transcription of genes that regulate cell-cycle progression through the phosphorylation of histones. Phosphorylates histone H3.1 (to form H3T11ph), which leads to epigenetic inhibition of a subset of genes. May also phosphorylate RB1 to promote its interaction with the E2F family of transcription factors and subsequent cell cycle arrest. Phosphorylates SPRTN, promoting SPRTN recruitment to chromatin. Reduces replication stress and activates the G2/M checkpoint, by phosphorylating and inactivating PABIR1/FAM122A and promoting the serine/threonine-protein phosphatase 2A-mediated dephosphorylation and stabilization of WEE1 levels and activity. The polypeptide is Serine/threonine-protein kinase Chk1 (Chek1) (Mus musculus (Mouse)).